A 464-amino-acid polypeptide reads, in one-letter code: Protein FAM90A5 (464 aa).

3 disordered regions span residues 16–42, 70–389, and 415–437; these read RAQTLQKQRRAPVGPRAPPPDEEDPRL, PATL…HDGA, and HSPEKPGAFLAQSPHVSEKSEAP. Composition is skewed to basic and acidic residues over residues 74 to 89 and 97 to 114; these read GKKEGKENLKPWKPRV and NKDKGEKEERPRQQDPQR. Positions 180-197 are enriched in low complexity; the sequence is LASLSPLRKASLSSSSSL.

The protein belongs to the FAM90 family.

The polypeptide is Protein FAM90A5 (Homo sapiens (Human)).